The following is a 209-amino-acid chain: NADH-quinone oxidoreductase subunit C (209 aa).

Belongs to the complex I 30 kDa subunit family. In terms of assembly, NDH-1 is composed of 14 different subunits. Subunits NuoB, C, D, E, F, and G constitute the peripheral sector of the complex.

It is found in the cell inner membrane. The enzyme catalyses a quinone + NADH + 5 H(+)(in) = a quinol + NAD(+) + 4 H(+)(out). Its function is as follows. NDH-1 shuttles electrons from NADH, via FMN and iron-sulfur (Fe-S) centers, to quinones in the respiratory chain. The immediate electron acceptor for the enzyme in this species is believed to be ubiquinone. Couples the redox reaction to proton translocation (for every two electrons transferred, four hydrogen ions are translocated across the cytoplasmic membrane), and thus conserves the redox energy in a proton gradient. The sequence is that of NADH-quinone oxidoreductase subunit C from Bordetella petrii (strain ATCC BAA-461 / DSM 12804 / CCUG 43448).